The sequence spans 104 residues: N(4)-acetylcytidine amidohydrolase (104 aa).

In terms of domain architecture, ASCH spans 6–94 (ITFFQRFQND…IAEIYPNQTQ (89 aa)). Lysine 21 functions as the Proton acceptor in the catalytic mechanism. Threonine 24 acts as the Nucleophile in catalysis. The active-site Proton donor is the glutamate 74.

It belongs to the N(4)-acetylcytidine amidohydrolase family.

The enzyme catalyses N(4)-acetylcytidine + H2O = cytidine + acetate + H(+). It catalyses the reaction N(4)-acetyl-2'-deoxycytidine + H2O = 2'-deoxycytidine + acetate + H(+). The catalysed reaction is N(4)-acetylcytosine + H2O = cytosine + acetate + H(+). Its function is as follows. Catalyzes the hydrolysis of N(4)-acetylcytidine (ac4C). This Salmonella dublin (strain CT_02021853) protein is N(4)-acetylcytidine amidohydrolase (yqfB).